Reading from the N-terminus, the 225-residue chain is Cytidylate kinase (225 aa).

12–20 (GPSGAGKGT) is an ATP binding site.

Belongs to the cytidylate kinase family. Type 1 subfamily.

It localises to the cytoplasm. The catalysed reaction is CMP + ATP = CDP + ADP. It carries out the reaction dCMP + ATP = dCDP + ADP. This is Cytidylate kinase from Proteus mirabilis (strain HI4320).